The following is a 158-amino-acid chain: NADH-quinone oxidoreductase subunit B (158 aa).

Cys-37, Cys-38, Cys-102, and Cys-132 together coordinate [4Fe-4S] cluster.

It belongs to the complex I 20 kDa subunit family. NDH-1 is composed of 14 different subunits. Subunits NuoB, C, D, E, F, and G constitute the peripheral sector of the complex. It depends on [4Fe-4S] cluster as a cofactor.

The protein localises to the cell inner membrane. It carries out the reaction a quinone + NADH + 5 H(+)(in) = a quinol + NAD(+) + 4 H(+)(out). Its function is as follows. NDH-1 shuttles electrons from NADH, via FMN and iron-sulfur (Fe-S) centers, to quinones in the respiratory chain. Couples the redox reaction to proton translocation (for every two electrons transferred, four hydrogen ions are translocated across the cytoplasmic membrane), and thus conserves the redox energy in a proton gradient. The chain is NADH-quinone oxidoreductase subunit B from Alkalilimnicola ehrlichii (strain ATCC BAA-1101 / DSM 17681 / MLHE-1).